The following is a 343-amino-acid chain: Methionine import ATP-binding protein MetN (343 aa).

An ABC transporter domain is found at 2–241 (IKLFHINKIF…PKTPIAQAFI (240 aa)). Residue 38–45 (GSSGAGKS) coordinates ATP.

This sequence belongs to the ABC transporter superfamily. Methionine importer (TC 3.A.1.24) family. As to quaternary structure, the complex is composed of two ATP-binding proteins (MetN), two transmembrane proteins (MetI) and a solute-binding protein (MetQ).

It is found in the cell inner membrane. It catalyses the reaction L-methionine(out) + ATP + H2O = L-methionine(in) + ADP + phosphate + H(+). It carries out the reaction D-methionine(out) + ATP + H2O = D-methionine(in) + ADP + phosphate + H(+). Functionally, part of the ABC transporter complex MetNIQ involved in methionine import. Responsible for energy coupling to the transport system. The polypeptide is Methionine import ATP-binding protein MetN (Photorhabdus laumondii subsp. laumondii (strain DSM 15139 / CIP 105565 / TT01) (Photorhabdus luminescens subsp. laumondii)).